The following is a 440-amino-acid chain: 26S proteasome regulatory subunit 4 (440 aa).

Residues 1–13 (MGQSQSGGHGPGG) show a composition bias toward gly residues. The disordered stretch occupies residues 1-49 (MGQSQSGGHGPGGGKKDDKDKKKKYEPPVPTRVGKKKKKTKGPDAASKL). G2 carries N-myristoyl glycine lipidation. The residue at position 4 (S4) is a Phosphoserine. Basic and acidic residues predominate over residues 14-26 (GKKDDKDKKKKYE). Residue T53 is modified to Phosphothreonine. Positions 84 to 104 (QMKPLEEKQEEERSKVDDLRG) are disordered. The span at 86 to 103 (KPLEEKQEEERSKVDDLR) shows a compositional bias: basic and acidic residues. Residue 226–233 (GPPGTGKT) coordinates ATP. K237 participates in a covalent cross-link: Glycyl lysine isopeptide (Lys-Gly) (interchain with G-Cter in ubiquitin). An N6-acetyllysine modification is found at K258. T434 carries the phosphothreonine modification. A Phosphotyrosine modification is found at Y439.

Belongs to the AAA ATPase family. As to quaternary structure, component of the 19S proteasome regulatory particle complex. The 26S proteasome consists of a 20S core particle (CP) and two 19S regulatory subunits (RP). The regulatory particle is made of a lid composed of 9 subunits, a base containing 6 ATPases including PSMC1 and few additional components. Interacts with SCA7. Interacts with NGLY1. Interacts with PAAF1.

It is found in the cytoplasm. The protein localises to the nucleus. The protein resides in the membrane. Functionally, component of the 26S proteasome, a multiprotein complex involved in the ATP-dependent degradation of ubiquitinated proteins. This complex plays a key role in the maintenance of protein homeostasis by removing misfolded or damaged proteins, which could impair cellular functions, and by removing proteins whose functions are no longer required. Therefore, the proteasome participates in numerous cellular processes, including cell cycle progression, apoptosis, or DNA damage repair. PSMC1 belongs to the heterohexameric ring of AAA (ATPases associated with diverse cellular activities) proteins that unfolds ubiquitinated target proteins that are concurrently translocated into a proteolytic chamber and degraded into peptides. The polypeptide is 26S proteasome regulatory subunit 4 (PSMC1) (Homo sapiens (Human)).